Here is a 162-residue protein sequence, read N- to C-terminus: Ribosomal RNA large subunit methyltransferase H (162 aa).

Gly108 contributes to the S-adenosyl-L-methionine binding site.

It belongs to the RNA methyltransferase RlmH family. Homodimer.

It is found in the cytoplasm. It carries out the reaction pseudouridine(1915) in 23S rRNA + S-adenosyl-L-methionine = N(3)-methylpseudouridine(1915) in 23S rRNA + S-adenosyl-L-homocysteine + H(+). In terms of biological role, specifically methylates the pseudouridine at position 1915 (m3Psi1915) in 23S rRNA. The sequence is that of Ribosomal RNA large subunit methyltransferase H from Methylobacterium nodulans (strain LMG 21967 / CNCM I-2342 / ORS 2060).